The sequence spans 712 residues: Ribosome-releasing factor 2, mitochondrial (712 aa).

The N-terminal 28 residues, 1–28 (MQYSLLSAQLRCSRFLLRQQAPFINRCY), are a transit peptide targeting the mitochondrion. One can recognise a tr-type G domain in the interval 30-309 (DDIRNIGILA…AVNAYLPTPN (280 aa)). Residues 39–46 (AHIDAGKT), 103–107 (DTPGH), and 157–160 (NKMD) each bind GTP.

Belongs to the TRAFAC class translation factor GTPase superfamily. Classic translation factor GTPase family. EF-G/EF-2 subfamily.

Its subcellular location is the mitochondrion. Its function is as follows. Mitochondrial GTPase that mediates the disassembly of ribosomes from messenger RNA at the termination of mitochondrial protein biosynthesis. Not involved in the GTP-dependent ribosomal translocation step during translation elongation. This Drosophila virilis (Fruit fly) protein is Ribosome-releasing factor 2, mitochondrial.